Consider the following 137-residue polypeptide: Large ribosomal subunit protein uL16 (137 aa).

The protein belongs to the universal ribosomal protein uL16 family. In terms of assembly, part of the 50S ribosomal subunit.

Functionally, binds 23S rRNA and is also seen to make contacts with the A and possibly P site tRNAs. The polypeptide is Large ribosomal subunit protein uL16 (Mesorhizobium japonicum (strain LMG 29417 / CECT 9101 / MAFF 303099) (Mesorhizobium loti (strain MAFF 303099))).